We begin with the raw amino-acid sequence, 344 residues long: Oxygen sensor histidine kinase NreB (344 aa).

[4Fe-4S] cluster is bound by residues Cys58, Cys61, Cys73, and Cys76. A Histidine kinase domain is found at 152 to 344; it reads RISRELHDSV…GTNVTLNIPI (193 aa). His158 carries the post-translational modification Phosphohistidine; by autocatalysis.

Requires [4Fe-4S] cluster as cofactor. Post-translationally, autophosphorylated.

The protein localises to the cytoplasm. It catalyses the reaction ATP + protein L-histidine = ADP + protein N-phospho-L-histidine.. Functionally, member of the two-component regulatory system NreB/NreC involved in the control of dissimilatory nitrate/nitrite reduction in response to oxygen. NreB functions as a direct oxygen sensor histidine kinase which is autophosphorylated, in the absence of oxygen, probably at the conserved histidine residue, and transfers its phosphate group probably to a conserved aspartate residue of NreC. NreB/NreC activates the expression of the nitrate (narGHJI) and nitrite (nir) reductase operons, as well as the putative nitrate transporter gene narT. This chain is Oxygen sensor histidine kinase NreB (nreB), found in Staphylococcus aureus (strain Mu3 / ATCC 700698).